The chain runs to 101 residues: MFVKKGDKVRVIAGKDKGTEAVVLKALPKVNKVVVEGVAIIKKHQKPSTENPQGAIVEKEAPIHASNVQVLDKNGVAGRVGYKVVDGKKVRYNKKSGEVLD.

This sequence belongs to the universal ribosomal protein uL24 family. In terms of assembly, part of the 50S ribosomal subunit.

In terms of biological role, one of two assembly initiator proteins, it binds directly to the 5'-end of the 23S rRNA, where it nucleates assembly of the 50S subunit. Its function is as follows. One of the proteins that surrounds the polypeptide exit tunnel on the outside of the subunit. This is Large ribosomal subunit protein uL24 from Streptococcus thermophilus (strain CNRZ 1066).